A 264-amino-acid polypeptide reads, in one-letter code: Small ribosomal subunit protein uS2 (264 aa).

This sequence belongs to the universal ribosomal protein uS2 family.

The sequence is that of Small ribosomal subunit protein uS2 (rpsB) from Helicobacter pylori (strain ATCC 700392 / 26695) (Campylobacter pylori).